A 392-amino-acid polypeptide reads, in one-letter code: Telomere-binding protein subunit beta (392 aa).

Residues 234 to 392 (QQVESVQVQP…ASKASKRSKK (159 aa)) form a disordered region. A compositionally biased stretch (basic residues) spans 247-256 (GGAKGKKKAA). Over residues 257–268 (TKSATKKTVAAK) the composition is skewed to low complexity. A compositionally biased stretch (basic and acidic residues) spans 269–284 (KTAESADVRKSVDKIV). Residues 328–343 (SPSGKKSTKTTDQMTM) show a composition bias toward polar residues. The span at 374 to 384 (GKASATSGKAS) shows a compositional bias: low complexity.

Heterodimer of an alpha and a beta subunit.

It is found in the nucleus. The protein localises to the chromosome. It localises to the telomere. In terms of biological role, may function as protective capping of the single-stranded telomeric overhang. May also participate in telomere length regulation during DNA replication. This chain is Telomere-binding protein subunit beta (STY43), found in Stylonychia mytilus (Ciliate).